Reading from the N-terminus, the 123-residue chain is Ribonuclease P protein component (123 aa).

This sequence belongs to the RnpA family. In terms of assembly, consists of a catalytic RNA component (M1 or rnpB) and a protein subunit.

The catalysed reaction is Endonucleolytic cleavage of RNA, removing 5'-extranucleotides from tRNA precursor.. Its function is as follows. RNaseP catalyzes the removal of the 5'-leader sequence from pre-tRNA to produce the mature 5'-terminus. It can also cleave other RNA substrates such as 4.5S RNA. The protein component plays an auxiliary but essential role in vivo by binding to the 5'-leader sequence and broadening the substrate specificity of the ribozyme. In Streptococcus pneumoniae (strain Hungary19A-6), this protein is Ribonuclease P protein component.